Here is a 271-residue protein sequence, read N- to C-terminus: Formamidopyrimidine-DNA glycosylase (271 aa).

Residue Pro-2 is the Schiff-base intermediate with DNA of the active site. The active-site Proton donor is the Glu-3. Lys-57 functions as the Proton donor; for beta-elimination activity in the catalytic mechanism. DNA is bound by residues His-90, Arg-109, and Lys-151. The FPG-type zinc-finger motif lies at 236 to 270 (HVYGRGSKSCTHCGNLLSEIRLGQRTTVFCGLCQT). The active-site Proton donor; for delta-elimination activity is the Arg-260.

Belongs to the FPG family. Monomer. Zn(2+) serves as cofactor.

The enzyme catalyses Hydrolysis of DNA containing ring-opened 7-methylguanine residues, releasing 2,6-diamino-4-hydroxy-5-(N-methyl)formamidopyrimidine.. It catalyses the reaction 2'-deoxyribonucleotide-(2'-deoxyribose 5'-phosphate)-2'-deoxyribonucleotide-DNA = a 3'-end 2'-deoxyribonucleotide-(2,3-dehydro-2,3-deoxyribose 5'-phosphate)-DNA + a 5'-end 5'-phospho-2'-deoxyribonucleoside-DNA + H(+). Involved in base excision repair of DNA damaged by oxidation or by mutagenic agents. Acts as a DNA glycosylase that recognizes and removes damaged bases. Has a preference for oxidized purines, such as 7,8-dihydro-8-oxoguanine (8-oxoG). Has AP (apurinic/apyrimidinic) lyase activity and introduces nicks in the DNA strand. Cleaves the DNA backbone by beta-delta elimination to generate a single-strand break at the site of the removed base with both 3'- and 5'-phosphates. The chain is Formamidopyrimidine-DNA glycosylase from Shewanella denitrificans (strain OS217 / ATCC BAA-1090 / DSM 15013).